The following is a 298-amino-acid chain: Ribosomal RNA small subunit methyltransferase A (298 aa).

S-adenosyl-L-methionine is bound by residues Asn-35, Leu-37, Gly-62, Glu-83, Asp-108, and Asn-133.

Belongs to the class I-like SAM-binding methyltransferase superfamily. rRNA adenine N(6)-methyltransferase family. RsmA subfamily.

The protein resides in the cytoplasm. It carries out the reaction adenosine(1518)/adenosine(1519) in 16S rRNA + 4 S-adenosyl-L-methionine = N(6)-dimethyladenosine(1518)/N(6)-dimethyladenosine(1519) in 16S rRNA + 4 S-adenosyl-L-homocysteine + 4 H(+). Functionally, specifically dimethylates two adjacent adenosines (A1518 and A1519) in the loop of a conserved hairpin near the 3'-end of 16S rRNA in the 30S particle. May play a critical role in biogenesis of 30S subunits. This is Ribosomal RNA small subunit methyltransferase A from Streptococcus pyogenes serotype M4 (strain MGAS10750).